The following is a 306-amino-acid chain: Cytochrome P450 monooxygenase aclO (306 aa).

Cysteine 237 lines the heme pocket.

Belongs to the cytochrome P450 family. Heme is required as a cofactor.

It functions in the pathway mycotoxin biosynthesis. Cytochrome P450 monooxygenase; part of the gene cluster that mediates the biosynthesis of aspirochlorine (or antibiotic A30641), an unusual halogenated spiro compound with distinctive antifungal properties due to selective inhibition of protein biosynthesis, and which is also active against bacteria, viruses, and murine tumor cells. The non-ribosomal peptide synthetase (NRPS) aclP is responsible the formation of the diketopiperazine (DKP) core from the condensation of 2 phenylalanine residues. One Phe residue is tailored into chlorotyrosine by hydroxylation and chlorination, whereas the second Phe undergoes an unprecedented C-C bond cleavage to be converted into glycine. After formation of the DKP, sulfur is incorporated into the DKP by conjugation with glutathione by aclG, followed by its stepwise degradation to the thiol by aclI, aclJ and aclK, and the dithiol oxidation by aclT. In addition, oxygenases (aclB, aclC, aclL and aclO) and O-methyltransferases (aclM and aclU) act as tailoring enzymes to produce the intermediate dechloroaspirochlorine. Ultimately, chlorination of dechloroaspirochlorine by the halogenase aclH is the last step in the aspirochlorine pathway. The sequence is that of Cytochrome P450 monooxygenase aclO from Aspergillus oryzae (strain ATCC 42149 / RIB 40) (Yellow koji mold).